The primary structure comprises 153 residues: Deoxyuridine 5'-triphosphate nucleotidohydrolase (153 aa).

Substrate-binding positions include 65 to 67 (RSG), Asn78, and 82 to 84 (TID). The disordered stretch occupies residues 132-153 (MTQRGEGGFGHTGISAVHPRTH).

The protein belongs to the dUTPase family. It depends on Mg(2+) as a cofactor.

The catalysed reaction is dUTP + H2O = dUMP + diphosphate + H(+). It functions in the pathway pyrimidine metabolism; dUMP biosynthesis; dUMP from dCTP (dUTP route): step 2/2. This enzyme is involved in nucleotide metabolism: it produces dUMP, the immediate precursor of thymidine nucleotides and it decreases the intracellular concentration of dUTP so that uracil cannot be incorporated into DNA. The chain is Deoxyuridine 5'-triphosphate nucleotidohydrolase from Chlorobium limicola (strain DSM 245 / NBRC 103803 / 6330).